The primary structure comprises 1499 residues: Ubiquitinating/deubiquitinating enzyme SdeA (1499 aa).

The tract at residues 1–193 (MPKYVEGVEL…GKALRENTEK (193 aa)) is deubiquitinase. Catalysis depends on for deubiquitinase activity residues H64 and D80. Residue C118 is the Nucleophile; for deubiquitinase activity of the active site. A mono-ADP-ribosyltransferase region spans residues 760–1000 (PPTRLFRGLN…KALAAFPSDT (241 aa)). Residue 766–772 (RGLNLSE) participates in NAD(+) binding. E860 is modified (5-glutamyl glutamate). Residue E862 coordinates NAD(+). Positions 1059 to 1181 (KEMGTIRREL…IDTKLADAYL (123 aa)) form a coiled coil.

This sequence belongs to the SidE family. Interacts with IcmS. In terms of processing, is able to ubiquitinate itself, but this modification is not required to ubiquitinate Rab33b. Post-translationally, glutamylated at Glu-860 by SidJ; glutamylation inhibits SdeA activity to catalyze the production of ADP-ribosylated ubiquitin.

Its subcellular location is the secreted. It localises to the host cell. It carries out the reaction L-arginyl-[protein] + NAD(+) = N(omega)-(ADP-D-ribosyl)-L-arginyl-[protein] + nicotinamide + H(+). With respect to regulation, ubiquitination catalyzed by SdeA is insensitive to the cysteine alkylation agent maleimide, suggesting that a cysteine conjugation of ubiquitin does not form during the reaction. In terms of biological role, secreted effector that interferes with the host cell ubiquitin pathway and is required for intracellular bacterial replication. Catalyzes the ubiquitination of several mammalian Rab proteins (Rab33b, Rab1, Rab6a and Rab30) during L.pneumophila infection, without engaging the standard cellular enzyme cascade (E1 and E2). Transfers an ADP-ribose moiety from NAD to the 'Arg-42' residue of ubiquitin in a reaction that releases nicotinamide. The modified ubiquitin is subsequently transferred to serine residues of the substrate protein via a phosphoribose linker that results in the release of AMP. Cannot ubiquitinate the endosomal Rab5 or the cytoskeletal small GTPase Rac1. Also acts as a deubiquitinase (DUB), catalyzing the cleavage of three of the most abundant polyubiquitin chains ('Lys-11', 'Lys-48' and 'Lys-63') with a distinct preference for 'Lys-63' linkages; is thus able to efficiently remove 'Lys-63'-linked polyubiquitin chains from the phagosomal surface. Is also able to remove NEDD8 from neddylated proteins, but is unable to recognize SUMO. The DUB activity of SdeA is important for regulating the dynamics of ubiquitin association with the bacterial phagosome, but is dispensable for its role in intracellular bacterial replication. The protein is Ubiquitinating/deubiquitinating enzyme SdeA of Legionella pneumophila subsp. pneumophila (strain Philadelphia 1 / ATCC 33152 / DSM 7513).